Consider the following 466-residue polypeptide: L-seryl-tRNA(Sec) selenium transferase (466 aa).

Lys-292 is subject to N6-(pyridoxal phosphate)lysine.

This sequence belongs to the SelA family. It depends on pyridoxal 5'-phosphate as a cofactor.

It localises to the cytoplasm. It catalyses the reaction L-seryl-tRNA(Sec) + selenophosphate + H(+) = L-selenocysteinyl-tRNA(Sec) + phosphate. It functions in the pathway aminoacyl-tRNA biosynthesis; selenocysteinyl-tRNA(Sec) biosynthesis; selenocysteinyl-tRNA(Sec) from L-seryl-tRNA(Sec) (bacterial route): step 1/1. Functionally, converts seryl-tRNA(Sec) to selenocysteinyl-tRNA(Sec) required for selenoprotein biosynthesis. The chain is L-seryl-tRNA(Sec) selenium transferase from Rhizobium meliloti (strain 1021) (Ensifer meliloti).